Reading from the N-terminus, the 258-residue chain is Small ribosomal subunit protein uS2 (258 aa).

Residues 227 to 258 form a disordered region; that stretch reads GEQFAPASEQKEEVKTQEVQEVEDSNDDVIDD. The span at 235–244 shows a compositional bias: basic and acidic residues; the sequence is EQKEEVKTQE. Residues 246 to 258 show a composition bias toward acidic residues; sequence QEVEDSNDDVIDD.

Belongs to the universal ribosomal protein uS2 family.

The polypeptide is Small ribosomal subunit protein uS2 (Caldicellulosiruptor saccharolyticus (strain ATCC 43494 / DSM 8903 / Tp8T 6331)).